The primary structure comprises 332 residues: Biotin synthase (332 aa).

A Radical SAM core domain is found at 53-283; sequence WGKGGVHACS…VHPRKTIKFA (231 aa). [4Fe-4S] cluster-binding residues include Cys-71, Cys-75, and Cys-78. [2Fe-2S] cluster contacts are provided by Cys-150, Cys-211, and Lys-281.

Belongs to the radical SAM superfamily. Biotin synthase family. Homodimer. It depends on [4Fe-4S] cluster as a cofactor. The cofactor is [2Fe-2S] cluster.

It catalyses the reaction (4R,5S)-dethiobiotin + (sulfur carrier)-SH + 2 reduced [2Fe-2S]-[ferredoxin] + 2 S-adenosyl-L-methionine = (sulfur carrier)-H + biotin + 2 5'-deoxyadenosine + 2 L-methionine + 2 oxidized [2Fe-2S]-[ferredoxin]. Its pathway is cofactor biosynthesis; biotin biosynthesis; biotin from 7,8-diaminononanoate: step 2/2. In terms of biological role, catalyzes the conversion of dethiobiotin (DTB) to biotin by the insertion of a sulfur atom into dethiobiotin via a radical-based mechanism. The chain is Biotin synthase from Chlorobium luteolum (strain DSM 273 / BCRC 81028 / 2530) (Pelodictyon luteolum).